Here is a 354-residue protein sequence, read N- to C-terminus: Rhodopsin (354 aa).

Residues 1–36 (MNGTEGENFYVPMSNKTGVVRNPFEYPQYYLADHWM) lie on the Extracellular side of the membrane. N-linked (GlcNAc...) asparagine glycans are attached at residues Asn2 and Asn15. The helical transmembrane segment at 37–61 (FAVLAAYMFFLIITGFPVNFLTLFV) threads the bilayer. Residues 62–73 (TIQNKKLRQPLN) are Cytoplasmic-facing. A helical transmembrane segment spans residues 74 to 96 (YILLNLAVANLFMVFGGFTTTLI). Topologically, residues 97–110 (TSMNGYFVFGSTGC) are extracellular. A disulfide bond links Cys110 and Cys187. A helical membrane pass occupies residues 111 to 133 (NLEGFFATLGGEISLWSLVVLAI). Positions 134–136 (ERY) match the 'Ionic lock' involved in activated form stabilization motif. Residues 134-152 (ERYVVVCKPMSNFRFGSQH) are Cytoplasmic-facing. Residues 153 to 173 (AIAGVSLTWVMAMACAAPPLV) traverse the membrane as a helical segment. Residues 174–202 (GWSRYIPEGLQCSCGIDYYTPKPEINNVS) are Extracellular-facing. An N-linked (GlcNAc...) asparagine glycan is attached at Asn200. The chain crosses the membrane as a helical span at residues 203–224 (FVIYMFVVHFSIPLTIIFFCYG). Topologically, residues 225 to 252 (RLVCTVKAAAAQQQESETTQRAEREVTR) are cytoplasmic. The chain crosses the membrane as a helical span at residues 253–274 (MVVIMVIGFLICWLPYASVALY). At 275 to 286 (IFNNQGSEFGPV) the chain is on the extracellular side. The chain crosses the membrane as a helical span at residues 287–308 (FMTIPSFFAKSSALYNPLIYIL). At Lys296 the chain carries N6-(retinylidene)lysine. At 309 to 354 (MNKQFRNCMITTLCCGKNPFEEEESTSASASKTEASSVSSSQVSPA) the chain is on the cytoplasmic side. Residues Cys322 and Cys323 are each lipidated (S-palmitoyl cysteine). Residues 333–354 (STSASASKTEASSVSSSQVSPA) form a disordered region. Over residues 334–354 (TSASASKTEASSVSSSQVSPA) the composition is skewed to low complexity.

It belongs to the G-protein coupled receptor 1 family. Opsin subfamily. Post-translationally, phosphorylated on some or all of the serine and threonine residues present in the C-terminal region. In terms of processing, contains one covalently linked retinal chromophore.

Its subcellular location is the membrane. The protein resides in the cell projection. The protein localises to the cilium. It localises to the photoreceptor outer segment. Its function is as follows. Photoreceptor required for image-forming vision at low light intensity. While most salt water fish species use retinal as chromophore, most freshwater fish use 3-dehydroretinal, or a mixture of retinal and 3-dehydroretinal. Light-induced isomerization of 11-cis to all-trans retinal triggers a conformational change that activates signaling via G-proteins. Subsequent receptor phosphorylation mediates displacement of the bound G-protein alpha subunit by arrestin and terminates signaling. This is Rhodopsin (rho) from Galeus melastomus (Blackmouth catshark).